The primary structure comprises 467 residues: Trigger factor (467 aa).

The PPIase FKBP-type domain maps to 162 to 243; that stretch reads GDFVSIDLSA…LNSVKERHLP (82 aa). Positions 426–435 are enriched in acidic residues; sequence EEGNELDLDE. The disordered stretch occupies residues 426-467; sequence EEGNELDLDELFGTQAGEEQGEQAEGTEATDEQSAKADAKAE. Low complexity predominate over residues 436 to 452; the sequence is LFGTQAGEEQGEQAEGT. Positions 458-467 are enriched in basic and acidic residues; it reads QSAKADAKAE.

The protein belongs to the FKBP-type PPIase family. Tig subfamily.

Its subcellular location is the cytoplasm. The enzyme catalyses [protein]-peptidylproline (omega=180) = [protein]-peptidylproline (omega=0). In terms of biological role, involved in protein export. Acts as a chaperone by maintaining the newly synthesized protein in an open conformation. Functions as a peptidyl-prolyl cis-trans isomerase. This chain is Trigger factor, found in Saccharopolyspora erythraea (strain ATCC 11635 / DSM 40517 / JCM 4748 / NBRC 13426 / NCIMB 8594 / NRRL 2338).